A 508-amino-acid chain; its full sequence is Photosystem II CP47 reaction center protein (508 aa).

Transmembrane regions (helical) follow at residues 21-36 (SVHI…WAGS), 101-115 (IVFS…IWHW), 140-156 (GIHL…FGAF), 203-218 (IAAG…FHLS), 237-252 (VLSS…AFVV), and 457-472 (SFAL…HGAR).

Belongs to the PsbB/PsbC family. PsbB subfamily. In terms of assembly, PSII is composed of 1 copy each of membrane proteins PsbA, PsbB, PsbC, PsbD, PsbE, PsbF, PsbH, PsbI, PsbJ, PsbK, PsbL, PsbM, PsbT, PsbX, PsbY, PsbZ, Psb30/Ycf12, at least 3 peripheral proteins of the oxygen-evolving complex and a large number of cofactors. It forms dimeric complexes. Binds multiple chlorophylls. PSII binds additional chlorophylls, carotenoids and specific lipids. is required as a cofactor.

It localises to the plastid. The protein resides in the chloroplast thylakoid membrane. Its function is as follows. One of the components of the core complex of photosystem II (PSII). It binds chlorophyll and helps catalyze the primary light-induced photochemical processes of PSII. PSII is a light-driven water:plastoquinone oxidoreductase, using light energy to abstract electrons from H(2)O, generating O(2) and a proton gradient subsequently used for ATP formation. In Lemna minor (Common duckweed), this protein is Photosystem II CP47 reaction center protein.